Reading from the N-terminus, the 130-residue chain is Small ribosomal subunit protein uS9 (130 aa).

The segment at 99-130 is disordered; that stretch reads KRAGLLTRDPRMKERKKPGLKAARRSPQFSKR. Basic residues predominate over residues 111 to 130; the sequence is KERKKPGLKAARRSPQFSKR.

The protein belongs to the universal ribosomal protein uS9 family.

This is Small ribosomal subunit protein uS9 from Staphylococcus aureus (strain Mu3 / ATCC 700698).